Consider the following 626-residue polypeptide: Transketolase-like protein 2 (626 aa).

Thiamine diphosphate is bound by residues serine 41, histidine 78, and 124-126 (GSL). Aspartate 156 is a Mg(2+) binding site. Thiamine diphosphate-binding residues include glycine 157 and asparagine 186. Mg(2+) is bound by residues asparagine 186 and leucine 188. The thiamine diphosphate site is built by lysine 248 and histidine 262. Substrate-binding residues include histidine 262 and serine 349. Thiamine diphosphate contacts are provided by glutamate 370 and phenylalanine 396. Residue glutamate 370 is the Proton donor of the active site. Histidine 420 and aspartate 428 together coordinate substrate. Residue glutamine 432 coordinates thiamine diphosphate.

The protein belongs to the transketolase family. Homodimer. Mg(2+) serves as cofactor. It depends on Ca(2+) as a cofactor. Requires Mn(2+) as cofactor. The cofactor is Co(2+). Thiamine diphosphate is required as a cofactor. Overexpressed in hepatoma cancer cells.

The catalysed reaction is D-sedoheptulose 7-phosphate + D-glyceraldehyde 3-phosphate = aldehydo-D-ribose 5-phosphate + D-xylulose 5-phosphate. Its function is as follows. Plays an essential role in total transketolase activity and cell proliferation in cancer cells; after transfection with anti-TKTL1 siRNA, total transketolase activity dramatically decreases and proliferation was significantly inhibited in cancer cells. Plays a pivotal role in carcinogenesis. The polypeptide is Transketolase-like protein 2 (TKTL2) (Homo sapiens (Human)).